The following is a 436-amino-acid chain: Glutamate-1-semialdehyde 2,1-aminomutase (436 aa).

Position 274 is an N6-(pyridoxal phosphate)lysine (Lys-274).

The protein belongs to the class-III pyridoxal-phosphate-dependent aminotransferase family. HemL subfamily. As to quaternary structure, homodimer. The cofactor is pyridoxal 5'-phosphate.

The protein localises to the cytoplasm. The enzyme catalyses (S)-4-amino-5-oxopentanoate = 5-aminolevulinate. The protein operates within porphyrin-containing compound metabolism; protoporphyrin-IX biosynthesis; 5-aminolevulinate from L-glutamyl-tRNA(Glu): step 2/2. This Albidiferax ferrireducens (strain ATCC BAA-621 / DSM 15236 / T118) (Rhodoferax ferrireducens) protein is Glutamate-1-semialdehyde 2,1-aminomutase.